The chain runs to 362 residues: MFEKGYVDENYVRIPKDELFSFVVRVLTKLGTPEEDAKIVADNLIMADLRGIESHGVQRLKRYVDGILSGGINLHPRIKIIREGPSYALLDGDEGFGQVVGYKAMKLAIEKARKTGIGIVAVRNSNHYGIAGYYALMAAEEGMIGISMTNSRPLVAPTGGVERILGTNPIALAAPTKGKPFLLDMATSVVPIGKLEVYRRKGEEIPEGWAINSKGEITRSVEEVFNGGSLLPLGGFGELLGGHKGYGLSLMVDILSGILSGGTWSKHVKNTNEKNSNVCHFFMAINIEHFTPLEEFKGRMSEMINEIKNSRKHPDFERIWIHGEKGFLTMETRLKLGIPIYKKVLDELNEIARRVGVKGLEV.

The protein belongs to the LDH2/MDH2 oxidoreductase family. As to quaternary structure, homodimer.

Its subcellular location is the cytoplasm. The catalysed reaction is (S)-malate + NAD(+) = oxaloacetate + NADH + H(+). This chain is Malate dehydrogenase (mdh), found in Pyrococcus abyssi (strain GE5 / Orsay).